A 247-amino-acid chain; its full sequence is Myelin-oligodendrocyte glycoprotein (247 aa).

The first 29 residues, methionine 1–alanine 29, serve as a signal peptide directing secretion. At glycine 30–glycine 154 the chain is on the extracellular side. Positions phenylalanine 32–glutamate 145 constitute an Ig-like V-type domain. Residues cysteine 53 and cysteine 127 are joined by a disulfide bond. A glycan (N-linked (GlcNAc...) asparagine) is linked at asparagine 60. Residues valine 155 to phenylalanine 175 traverse the membrane as a helical segment. Over leucine 176–threonine 210 the chain is Cytoplasmic. Residues leucine 211–leucine 231 traverse the membrane as a helical segment. Residues histidine 232–phenylalanine 247 lie on the Extracellular side of the membrane.

This sequence belongs to the immunoglobulin superfamily. BTN/MOG family. As to quaternary structure, homodimer. May form heterodimers between the different isoforms. (Microbial infection) Interacts with rubella virus E2 glycoprotein. In terms of tissue distribution, found exclusively in the CNS, where it is localized on the surface of myelin and oligodendrocyte cytoplasmic membranes.

Its subcellular location is the cell membrane. Functionally, mediates homophilic cell-cell adhesion. Minor component of the myelin sheath. May be involved in completion and/or maintenance of the myelin sheath and in cell-cell communication. In terms of biological role, (Microbial infection) Acts as a receptor for rubella virus. This Homo sapiens (Human) protein is Myelin-oligodendrocyte glycoprotein (MOG).